The chain runs to 318 residues: Acetyl-coenzyme A carboxylase carboxyl transferase subunit alpha (318 aa).

The CoA carboxyltransferase C-terminal domain maps to 34–295 (SIEEEITKLR…KATIKQQLAQ (262 aa)).

This sequence belongs to the AccA family. In terms of assembly, acetyl-CoA carboxylase is a heterohexamer composed of biotin carboxyl carrier protein (AccB), biotin carboxylase (AccC) and two subunits each of ACCase subunit alpha (AccA) and ACCase subunit beta (AccD).

It is found in the cytoplasm. It carries out the reaction N(6)-carboxybiotinyl-L-lysyl-[protein] + acetyl-CoA = N(6)-biotinyl-L-lysyl-[protein] + malonyl-CoA. Its pathway is lipid metabolism; malonyl-CoA biosynthesis; malonyl-CoA from acetyl-CoA: step 1/1. Component of the acetyl coenzyme A carboxylase (ACC) complex. First, biotin carboxylase catalyzes the carboxylation of biotin on its carrier protein (BCCP) and then the CO(2) group is transferred by the carboxyltransferase to acetyl-CoA to form malonyl-CoA. This Pseudoalteromonas atlantica (strain T6c / ATCC BAA-1087) protein is Acetyl-coenzyme A carboxylase carboxyl transferase subunit alpha.